We begin with the raw amino-acid sequence, 116 residues long: Peptidyl-tRNA hydrolase (116 aa).

It belongs to the PTH2 family.

The protein localises to the cytoplasm. It catalyses the reaction an N-acyl-L-alpha-aminoacyl-tRNA + H2O = an N-acyl-L-amino acid + a tRNA + H(+). Functionally, the natural substrate for this enzyme may be peptidyl-tRNAs which drop off the ribosome during protein synthesis. The chain is Peptidyl-tRNA hydrolase from Methanococcus maripaludis (strain C7 / ATCC BAA-1331).